We begin with the raw amino-acid sequence, 310 residues long: NADH-cytochrome b5 reductase 1 (310 aa).

Residues 30–50 (WVPFAVALAAGFVAWKLSVGG) traverse the membrane as a helical segment. The region spanning 61 to 166 (NEFQNFVLKE…RGPKGAMVYT (106 aa)) is the FAD-binding FR-type domain. FAD-binding positions include 146-160 (TTLK…RGPK) and 172-209 (HIGM…QVDL).

The protein belongs to the flavoprotein pyridine nucleotide cytochrome reductase family. In terms of assembly, monomer. Component of the 2-(3-amino-3-carboxypropyl)histidine synthase complex composed of dph1, dph2, dph3 and a NADH-dependent reductase, predominantly cbr1. It depends on FAD as a cofactor.

Its subcellular location is the mitochondrion outer membrane. The catalysed reaction is 2 Fe(III)-[cytochrome b5] + NADH = 2 Fe(II)-[cytochrome b5] + NAD(+) + H(+). It catalyses the reaction 2 Fe(3+)-[Dph3] + NADH = 2 Fe(2+)-[Dph3] + NAD(+) + H(+). The protein operates within protein modification; peptidyl-diphthamide biosynthesis. In terms of biological role, NADH-dependent reductase for dph3 and cytochrome b5. Required for the first step of diphthamide biosynthesis, a post-translational modification of histidine which occurs in elongation factor 2. Dph1 and dph2 transfer a 3-amino-3-carboxypropyl (ACP) group from S-adenosyl-L-methionine (SAM) to a histidine residue, the reaction is assisted by a reduction system comprising dph3 and a NADH-dependent reductase, predominantly cbr1. By reducing dph3, also involved in the formation of the tRNA wobble base modification mcm5s 2U (5-methoxycarbonylmethyl-2-thiouridine), mediated by the elongator complex. The cytochrome b5/NADH cytochrome b5 reductase electron transfer system supports the catalytic activity of several sterol biosynthetic enzymes. This Emericella nidulans (strain FGSC A4 / ATCC 38163 / CBS 112.46 / NRRL 194 / M139) (Aspergillus nidulans) protein is NADH-cytochrome b5 reductase 1 (cbr1).